A 360-amino-acid chain; its full sequence is A-type ATP synthase subunit C (360 aa).

Belongs to the V-ATPase V0D/AC39 subunit family. Has multiple subunits, A(3), B(3), C, D, E, F, G, I and K(x); there may be a few other subunits as well.

The protein localises to the cell membrane. Its function is as follows. Component of the A-type ATP synthase that produces ATP from ADP in the presence of a proton gradient across the membrane. In Methanosarcina mazei (strain ATCC BAA-159 / DSM 3647 / Goe1 / Go1 / JCM 11833 / OCM 88) (Methanosarcina frisia), this protein is A-type ATP synthase subunit C.